A 364-amino-acid chain; its full sequence is Methylthioribose-1-phosphate isomerase (364 aa).

Aspartate 254 acts as the Proton donor in catalysis.

The protein belongs to the eIF-2B alpha/beta/delta subunits family. MtnA subfamily.

It is found in the cytoplasm. The protein resides in the nucleus. It carries out the reaction 5-(methylsulfanyl)-alpha-D-ribose 1-phosphate = 5-(methylsulfanyl)-D-ribulose 1-phosphate. It participates in amino-acid biosynthesis; L-methionine biosynthesis via salvage pathway; L-methionine from S-methyl-5-thio-alpha-D-ribose 1-phosphate: step 1/6. Catalyzes the interconversion of methylthioribose-1-phosphate (MTR-1-P) into methylthioribulose-1-phosphate (MTRu-1-P). The sequence is that of Methylthioribose-1-phosphate isomerase from Drosophila erecta (Fruit fly).